We begin with the raw amino-acid sequence, 409 residues long: L-cysteine:1D-myo-inositol 2-amino-2-deoxy-alpha-D-glucopyranoside ligase (409 aa).

C43 is a Zn(2+) binding site. L-cysteinyl-5'-AMP contacts are provided by residues C43–T46, T58, and N81–T83. Residues I45–H55 carry the 'HIGH' region motif. Positions E183–P188 match the 'ERGGDP' region motif. W224 serves as a coordination point for L-cysteinyl-5'-AMP. C228 serves as a coordination point for Zn(2+). Residue G246–D248 coordinates L-cysteinyl-5'-AMP. H253 contacts Zn(2+). V280 is a binding site for L-cysteinyl-5'-AMP. Residues K286–S290 carry the 'KMSKS' region motif.

The protein belongs to the class-I aminoacyl-tRNA synthetase family. MshC subfamily. In terms of assembly, monomer. Requires Zn(2+) as cofactor.

It carries out the reaction 1D-myo-inositol 2-amino-2-deoxy-alpha-D-glucopyranoside + L-cysteine + ATP = 1D-myo-inositol 2-(L-cysteinylamino)-2-deoxy-alpha-D-glucopyranoside + AMP + diphosphate + H(+). Its function is as follows. Catalyzes the ATP-dependent condensation of GlcN-Ins and L-cysteine to form L-Cys-GlcN-Ins. The chain is L-cysteine:1D-myo-inositol 2-amino-2-deoxy-alpha-D-glucopyranoside ligase from Streptomyces griseus subsp. griseus (strain JCM 4626 / CBS 651.72 / NBRC 13350 / KCC S-0626 / ISP 5235).